The following is a 418-amino-acid chain: Glutamyl-tRNA reductase (418 aa).

Residues 49 to 52, S107, 112 to 114, and Q118 contribute to the substrate site; these read TCNR and EPQ. Catalysis depends on C50, which acts as the Nucleophile. 187-192 lines the NADP(+) pocket; that stretch reads GAGETI.

This sequence belongs to the glutamyl-tRNA reductase family. In terms of assembly, homodimer.

It carries out the reaction (S)-4-amino-5-oxopentanoate + tRNA(Glu) + NADP(+) = L-glutamyl-tRNA(Glu) + NADPH + H(+). It participates in porphyrin-containing compound metabolism; protoporphyrin-IX biosynthesis; 5-aminolevulinate from L-glutamyl-tRNA(Glu): step 1/2. Its function is as follows. Catalyzes the NADPH-dependent reduction of glutamyl-tRNA(Glu) to glutamate 1-semialdehyde (GSA). The polypeptide is Glutamyl-tRNA reductase (Pseudoalteromonas translucida (strain TAC 125)).